Reading from the N-terminus, the 241-residue chain is 3-deoxy-D-manno-octulosonic acid kinase (241 aa).

The active site involves aspartate 171.

Belongs to the protein kinase superfamily. KdkA/RfaP family.

It is found in the cell inner membrane. It catalyses the reaction an alpha-Kdo-(2-&gt;6)-lipid IVA + ATP = a 4-O-phospho-alpha-Kdo-(2-&gt;6)-lipid IVA + ADP + H(+). Its pathway is bacterial outer membrane biogenesis; LPS core biosynthesis. In terms of biological role, catalyzes the ATP-dependent phosphorylation of the 3-deoxy-D-manno-octulosonic acid (Kdo) residue in Kdo-lipid IV(A) at the 4-OH position. The protein is 3-deoxy-D-manno-octulosonic acid kinase of Haemophilus influenzae (strain 86-028NP).